The sequence spans 509 residues: MSPNTPLVLVILDGWGCGDRVEGNAIAQADTPNWNRYRSVWPRTVLKCSGEDVGLPPGQMGNSEVGHLNLGAGRIVYQDLTRITRAVRDGSFFENAVLRTSIEASRRNGHALHLMGLLSDGGVHSHISHLFALLELAGRLDQRSVYVHAFLDGRDVPPANALEYVEALEDKLKTLGYGAVASVIGRYYAMDRDRRWERTARAYRAMVYGEGLRASSARQAVEKGYERGETDEFIQPTVIVRDGRPVAQVRDGDALVFFNFRPDRARQITRSFTDAEFGGFERGPAPAFPDFVCLTQYDRTIVAPVAFGPQELTNTLGNVLSRHGLRQLRLAETEKYAHVTFFFNGGVEQRDPGEDRLLIPSPKVPTYDLKPEMSAREVTDAFLANIEKYDIIIMNYANPDMVGHTGDLSAAIKAVETVDECLGRVVEAVLARGGTVLVSGDHGNAEHMCDAEGCPLTAHTCNPVPLLIIGEAVAGRSLRPGSLQDVAPTILDLLGLPKPPEMTGTSLLS.

The Mn(2+) site is built by Asp-13 and Ser-63. Ser-63 (phosphoserine intermediate) is an active-site residue. Residues His-124, 154 to 155, Arg-186, Arg-192, 261 to 264, and Lys-335 contribute to the substrate site; these read RD and RPDR. The Mn(2+) site is built by Asp-400, His-404, Asp-441, His-442, and His-459.

It belongs to the BPG-independent phosphoglycerate mutase family. Monomer. The cofactor is Mn(2+).

It catalyses the reaction (2R)-2-phosphoglycerate = (2R)-3-phosphoglycerate. It functions in the pathway carbohydrate degradation; glycolysis; pyruvate from D-glyceraldehyde 3-phosphate: step 3/5. In terms of biological role, catalyzes the interconversion of 2-phosphoglycerate and 3-phosphoglycerate. The sequence is that of 2,3-bisphosphoglycerate-independent phosphoglycerate mutase from Desulforudis audaxviator (strain MP104C).